The sequence spans 151 residues: UPF0756 membrane protein GK2737 (151 aa).

The next 4 helical transmembrane spans lie at 5-25 (VLFL…SLIV), 53-73 (WGVT…EIGF), 79-99 (SLQS…ALIA), and 121-141 (ILAV…AGIA).

This sequence belongs to the UPF0756 family.

It is found in the cell membrane. This chain is UPF0756 membrane protein GK2737, found in Geobacillus kaustophilus (strain HTA426).